The following is an 87-amino-acid chain: Omega-theraphotoxin-Gr1a (87 aa).

The first 24 residues, 1–24 (MKAQIFVVVLGLAALSVLCYGSEA), serve as a signal peptide directing secretion. The propeptide occupies 25–49 (DESALHEEIFQLLAASDEVPKPQER). Cystine bridges form between Cys51/Cys65, Cys58/Cys70, and Cys64/Cys79. The residue at position 85 (Val85) is a Valine amide.

Expressed by the venom gland.

The protein localises to the secreted. Inhibits P/Q- (Cav2.1/CACNA1A) and N-type (Cav2.2/CACNA1B) voltage-gated calcium channel by modifying voltage-dependent gating. It selectively and reversibly blocks the calcium channels coupled to glutamate release. Also inhibits potassium channels (Kv2.1/KCNB1) with lower affinity. Has also been shown to weakly inhibit Kv11.1/KCNH2/ERG1, Kv1.2/KCNA2, Kv1.3/KCNA3, Nav1.5/SCN5A, Nav1.7/SCN9A and TRPV1. This Grammostola rosea (Chilean rose tarantula) protein is Omega-theraphotoxin-Gr1a.